The following is a 461-amino-acid chain: UDP-N-acetylmuramoylalanine--D-glutamate ligase (461 aa).

117–123 (GTNGKTT) contributes to the ATP binding site.

It belongs to the MurCDEF family.

The protein localises to the cytoplasm. It catalyses the reaction UDP-N-acetyl-alpha-D-muramoyl-L-alanine + D-glutamate + ATP = UDP-N-acetyl-alpha-D-muramoyl-L-alanyl-D-glutamate + ADP + phosphate + H(+). It functions in the pathway cell wall biogenesis; peptidoglycan biosynthesis. Functionally, cell wall formation. Catalyzes the addition of glutamate to the nucleotide precursor UDP-N-acetylmuramoyl-L-alanine (UMA). The protein is UDP-N-acetylmuramoylalanine--D-glutamate ligase of Synechococcus sp. (strain CC9605).